We begin with the raw amino-acid sequence, 277 residues long: Small ribosomal subunit protein uS3 (277 aa).

Residues 43–111 form the KH type-2 domain; it reads IRQLMSTGME…QVQLNILEVK (69 aa). Low complexity predominate over residues 218–228; the sequence is QQAAAAPSRGR. Residues 218–277 form a disordered region; that stretch reads QQAAAAPSRGRGASDRPGRPGGADRGDRRRRTDRPAAEAAPAAEAPAVEAAAPAVEGGQA. Positions 229–244 are enriched in basic and acidic residues; that stretch reads GASDRPGRPGGADRGD. Residues 254–277 are compositionally biased toward low complexity; that stretch reads AEAAPAAEAPAVEAAAPAVEGGQA.

This sequence belongs to the universal ribosomal protein uS3 family. Part of the 30S ribosomal subunit. Forms a tight complex with proteins S10 and S14.

Binds the lower part of the 30S subunit head. Binds mRNA in the 70S ribosome, positioning it for translation. In Arthrobacter sp. (strain FB24), this protein is Small ribosomal subunit protein uS3.